The sequence spans 498 residues: Lycopene beta cyclase, chloroplastic/chromoplastic (498 aa).

A chloroplast and chromoplast-targeting transit peptide spans methionine 1–glycine 79. Leucine 84–proline 112 lines the NAD(+) pocket. Positions phenylalanine 293–threonine 297 match the FLEET motif motif.

This sequence belongs to the lycopene cyclase family. As to quaternary structure, monomer. FAD serves as cofactor. Requires NADPH as cofactor.

The protein localises to the plastid. It localises to the chloroplast. It is found in the chromoplast. The enzyme catalyses a carotenoid psi-end group = a carotenoid beta-end derivative. It carries out the reaction all-trans-lycopene = gamma-carotene. It catalyses the reaction gamma-carotene = all-trans-beta-carotene. The catalysed reaction is all-trans-neurosporene = beta-zeacarotene. The enzyme catalyses beta-zeacarotene = 7,8-dihydro-beta-carotene. It functions in the pathway carotenoid biosynthesis; beta-carotene biosynthesis. The protein operates within carotenoid biosynthesis; beta-zeacarotene biosynthesis. In terms of biological role, catalyzes the double cyclization reaction which converts lycopene to beta-carotene. Catalyzes the double cyclization reaction which converts neurosporene to 7,8-dihydro-beta-carotene. The sequence is that of Lycopene beta cyclase, chloroplastic/chromoplastic from Capsicum annuum (Capsicum pepper).